The following is a 361-amino-acid chain: Serpentine receptor class epsilon-32 (361 aa).

7 consecutive transmembrane segments (helical) span residues 34–54 (IIELVFYISCFHLMTISLYVM), 66–86 (ILYIPMFCVWYGLIAGKLITI), 124–144 (LLIFGGFVQWHYMYTVVYGIL), 168–188 (IPIALTIITQFLAISTSLSVL), 195–215 (FLSHLPWIISCSLGALAYLFI), 256–276 (LVFVVFFYVAFVSFGMFALAF), and 286–306 (FVENFLFLNPYPICFTAMLTI).

This sequence belongs to the nematode receptor-like protein sre family.

It localises to the membrane. The chain is Serpentine receptor class epsilon-32 (sre-32) from Caenorhabditis elegans.